A 600-amino-acid polypeptide reads, in one-letter code: RNA-binding protein 47 (600 aa).

Residues 1-25 (MTAEDSASAVAMSNPSPSSSSKSSS) show a composition bias toward low complexity. The disordered stretch occupies residues 1–37 (MTAEDSASAVAMSNPSPSSSSKSSSGHPQHHCTVPEG). RRM domains are found at residues 82–160 (CEIF…SSVD), 162–244 (CRLF…WAEP), and 257–329 (KILY…LAKP).

Belongs to the RRM RBM47 family. Homodimer. May interact with MAVS; may regulate MAVS lysosomal degradation.

The protein localises to the nucleus. It localises to the cytoplasm. Functionally, single-stranded RNA-binding protein that functions in a variety of RNA processes, including alternative splicing, RNA stabilization, and RNA editing. Independently of its RNA-binding activity, could negatively regulate MAVS by promoting its lysosomal degradation. This is RNA-binding protein 47 (rbm47) from Danio rerio (Zebrafish).